Consider the following 147-residue polypeptide: Large ribosomal subunit protein uL23A (147 aa).

The span at 1–10 shows a compositional bias: low complexity; it reads MAPSAPAKTA. Residues 1 to 29 are disordered; that stretch reads MAPSAPAKTAKALDAKKKVVKGKRTTHRR. Over residues 18–29 the composition is skewed to basic residues; that stretch reads KVVKGKRTTHRR.

The protein belongs to the universal ribosomal protein uL23 family.

Functionally, this protein binds to a specific region on the 26S rRNA. The polypeptide is Large ribosomal subunit protein uL23A (Caenorhabditis elegans).